We begin with the raw amino-acid sequence, 555 residues long: Glutamine--tRNA ligase (555 aa).

Residues 34-44 carry the 'HIGH' region motif; sequence PEPNGYLHIGH. ATP-binding positions include 35 to 37 and 41 to 47; these read EPN and HIGHAKS. Asp-67 and Tyr-212 together coordinate L-glutamine. ATP-binding positions include Thr-231, 261–262, and 269–271; these read RL and MSK. Residues 268 to 272 carry the 'KMSKS' region motif; the sequence is VMSKR. The tract at residues 317–324 is interaction with tRNA; it reads TKQDNTIE.

It belongs to the class-I aminoacyl-tRNA synthetase family. Monomer.

Its subcellular location is the cytoplasm. The enzyme catalyses tRNA(Gln) + L-glutamine + ATP = L-glutaminyl-tRNA(Gln) + AMP + diphosphate. This is Glutamine--tRNA ligase from Salmonella choleraesuis (strain SC-B67).